Here is a 265-residue protein sequence, read N- to C-terminus: UDP-N-acetylenolpyruvoylglucosamine reductase (265 aa).

The FAD-binding PCMH-type domain maps to 15 to 169 (GVGGPAELWT…TRVRLKLKER (155 aa)). The active site involves Arg-149. Residues 182-203 (DRARKGQPKRKSAGCAFKNPPG) are disordered. The active-site Proton donor is the Cys-196.

Belongs to the MurB family. FAD is required as a cofactor.

It is found in the cytoplasm. The enzyme catalyses UDP-N-acetyl-alpha-D-muramate + NADP(+) = UDP-N-acetyl-3-O-(1-carboxyvinyl)-alpha-D-glucosamine + NADPH + H(+). It participates in cell wall biogenesis; peptidoglycan biosynthesis. Its function is as follows. Cell wall formation. The protein is UDP-N-acetylenolpyruvoylglucosamine reductase of Thermus thermophilus (strain ATCC 27634 / DSM 579 / HB8).